The following is a 429-amino-acid chain: Gap junction gamma-2 protein (429 aa).

The Cytoplasmic portion of the chain corresponds to 1–25 (MTNMSWSFLTRLLEEIHNHSTFVGK). A helical transmembrane segment spans residues 26–46 (VWLTVLVVFRIVLTAVGGESI). Residues 47-78 (YSDEQTKFTCNTRQPGCDNVCYDAFAPLSHVR) are Extracellular-facing. Residues 79–99 (FWVFQIVVISTPSVMYLGYAV) traverse the membrane as a helical segment. The Cytoplasmic segment spans residues 100–214 (HRLARASQDE…EGLMRVYVAQ (115 aa)). Residues 106 to 200 (SQDERRRASR…GPAGQHDGRR (95 aa)) form a disordered region. Residues 112–123 (RASRRRPSRRAP) are compositionally biased toward basic residues. Over residues 124–138 (RPPLPLPPPPHPGWP) the composition is skewed to pro residues. Residues 142 to 173 (DLGEEEPMLGLGEEDEDPGVAEGLGEDEEAED) are compositionally biased toward acidic residues. A helical transmembrane segment spans residues 215 to 235 (LVARAAFEVAFLVGQYLLYGF). At 236–263 (EVRPFFACSRQPCPHVVDCFVSRPTEKT) the chain is on the extracellular side. Residues 264–284 (VFLLVMYVVSCLCLLLNLCEM) traverse the membrane as a helical segment. Topologically, residues 285 to 429 (AHLGLGNAQD…SREGKTTVWI (145 aa)) are cytoplasmic. Disordered stretches follow at residues 296–316 (VRGR…PPCA) and 361–429 (LGDL…TVWI). The span at 303 to 316 (PASPGPMPRPPPCA) shows a compositional bias: pro residues. Position 366 is a phosphoserine (serine 366). A compositionally biased stretch (low complexity) spans 372 to 395 (LPANARGPPKPGAPASGSGSATSG).

The protein belongs to the connexin family. Gamma-type subfamily. A connexon is composed of a hexamer of connexins. Interacts with TJP1.

It is found in the cell membrane. It localises to the cell junction. Its subcellular location is the gap junction. In terms of biological role, one gap junction consists of a cluster of closely packed pairs of transmembrane channels, the connexons, through which materials of low MW diffuse from one cell to a neighboring cell. May play a role in myelination in central and peripheral nervous systems. The chain is Gap junction gamma-2 protein (GJC2) from Bos taurus (Bovine).